The chain runs to 603 residues: DNA mismatch repair protein MutL (603 aa).

It belongs to the DNA mismatch repair MutL/HexB family.

In terms of biological role, this protein is involved in the repair of mismatches in DNA. It is required for dam-dependent methyl-directed DNA mismatch repair. May act as a 'molecular matchmaker', a protein that promotes the formation of a stable complex between two or more DNA-binding proteins in an ATP-dependent manner without itself being part of a final effector complex. This chain is DNA mismatch repair protein MutL, found in Rhodopseudomonas palustris (strain BisA53).